A 588-amino-acid polypeptide reads, in one-letter code: Adenylate kinase 5, chloroplastic (588 aa).

The segment at 1 to 34 (MASLSLSSAHFSSTSSSSRSSISTSSLSPSSTSL) is disordered. Residues 1–73 (MASLSLSSAH…SFSTSNSQIR (73 aa)) constitute a chloroplast transit peptide. Position 89 to 94 (89 to 94 (ASGKGT)) interacts with ATP. The tract at residues 109–138 (STGDLLRAEVSSGTDIGKRAKEFMNSGSLV) is NMP. Residues Arg115, 136 to 138 (SLV), 165 to 168 (GFPR), and Gln172 contribute to the AMP site. The LID stretch occupies residues 202–235 (GRRLDPVTGKIYHIKNYPPESDEIKARLVTRPDD). Arg203 lines the ATP pocket. AMP contacts are provided by Arg232 and Arg243.

This sequence belongs to the adenylate kinase family. As to quaternary structure, monomer.

It is found in the plastid. The protein localises to the chloroplast. The enzyme catalyses AMP + ATP = 2 ADP. Catalyzes the reversible transfer of the terminal phosphate group between ATP and AMP. The chain is Adenylate kinase 5, chloroplastic from Arabidopsis thaliana (Mouse-ear cress).